Reading from the N-terminus, the 350-residue chain is UDP-N-acetylenolpyruvoylglucosamine reductase (350 aa).

The FAD-binding PCMH-type domain occupies 25–194 (VGPVARRLIT…LDVGGRSAPL (170 aa)). Residue arginine 166 is part of the active site. The active-site Proton donor is serine 243. Glutamate 342 is a catalytic residue.

This sequence belongs to the MurB family. It depends on FAD as a cofactor.

The protein resides in the cytoplasm. It catalyses the reaction UDP-N-acetyl-alpha-D-muramate + NADP(+) = UDP-N-acetyl-3-O-(1-carboxyvinyl)-alpha-D-glucosamine + NADPH + H(+). It functions in the pathway cell wall biogenesis; peptidoglycan biosynthesis. Cell wall formation. This chain is UDP-N-acetylenolpyruvoylglucosamine reductase, found in Mycobacterium sp. (strain MCS).